Reading from the N-terminus, the 345-residue chain is Dihydroorotase (345 aa).

Zn(2+)-binding residues include His13 and His15. Substrate is bound by residues 15–17 (HLR) and Asn41. Positions 99, 136, and 174 each coordinate Zn(2+). Lys99 carries the post-translational modification N6-carboxylysine. Residue His136 participates in substrate binding. Leu219 is a substrate binding site. Asp247 lines the Zn(2+) pocket. Asp247 is a catalytic residue. His251 and Ala263 together coordinate substrate.

The protein belongs to the metallo-dependent hydrolases superfamily. DHOase family. Class II DHOase subfamily. Homodimer. Zn(2+) is required as a cofactor.

The enzyme catalyses (S)-dihydroorotate + H2O = N-carbamoyl-L-aspartate + H(+). It functions in the pathway pyrimidine metabolism; UMP biosynthesis via de novo pathway; (S)-dihydroorotate from bicarbonate: step 3/3. Its function is as follows. Catalyzes the reversible cyclization of carbamoyl aspartate to dihydroorotate. This Agrobacterium fabrum (strain C58 / ATCC 33970) (Agrobacterium tumefaciens (strain C58)) protein is Dihydroorotase.